We begin with the raw amino-acid sequence, 243 residues long: R-spondin-2 (243 aa).

An N-terminal signal peptide occupies residues 1 to 21 (MQFQLFSFVLIILNCVDYSHC). 11 cysteine pairs are disulfide-bonded: C40–C46, C43–C52, C55–C74, C78–C93, C96–C104, C101–C110, C113–C124, C128–C141, C145–C187, C156–C163, and C196–C203. One copy of the FU repeat lies at 90 to 134 (MNRCSRCRIENCDSCFSRDFCIKCKSGFYSHKGQCFEECPEGFAP). Residues 144–204 (GCEVGPWSEW…RCKMAMRHCP (61 aa)) form the TSP type-1 domain. N160 is a glycosylation site (N-linked (GlcNAc...) asparagine). Residues 202–243 (HCPGGTRTTKKKDKKNKKKKKKLLERAQEQHSVVLATDRSSQ) are disordered. Basic residues predominate over residues 209–224 (TTKKKDKKNKKKKKKL).

The protein belongs to the R-spondin family. As to quaternary structure, binds heparin.

It localises to the secreted. Functionally, activator of the canonical Wnt signaling pathway by acting as a ligand for lgr4-6 receptors. Upon binding to lgr4-6 (lgr4, lgr5 or lgr6), lgr4-6 associate with phosphorylated lrp6 and frizzled receptors that are activated by extracellular Wnt receptors, triggering the canonical Wnt signaling pathway to increase expression of target genes. Acts both in the canonical. Wnt/beta-catenin-dependent pathway and in non-canonical Wnt signaling pathway. Activates neural markers and promotes muscle formation. Overexpression blocks activin, nodal and BMP4 signaling, suggesting that it may negatively regulate the TGF-beta pathway. During embryonic development, plays a crucial role in limb specification, amplifying the Wnt signaling pathway independently of LGR4-6 receptors, possibly by acting as a direct antagonistic ligand to RNF43 and ZNRF3, hence governing the number of limbs an embryo should form. In Xenopus tropicalis (Western clawed frog), this protein is R-spondin-2 (rspo2).